The following is a 567-amino-acid chain: Urease subunit alpha (567 aa).

The Urease domain occupies 129–567 (GGIDTHIHFI…LPMAQRYFLF (439 aa)). Residues H134, H136, and K217 each contribute to the Ni(2+) site. K217 is modified (N6-carboxylysine). H219 is a substrate binding site. 2 residues coordinate Ni(2+): H246 and H272. Catalysis depends on H320, which acts as the Proton donor. Ni(2+) is bound at residue D360.

The protein belongs to the metallo-dependent hydrolases superfamily. Urease alpha subunit family. As to quaternary structure, heterotrimer of UreA (gamma), UreB (beta) and UreC (alpha) subunits. Three heterotrimers associate to form the active enzyme. Ni cation is required as a cofactor. Post-translationally, carboxylation allows a single lysine to coordinate two nickel ions.

It localises to the cytoplasm. It catalyses the reaction urea + 2 H2O + H(+) = hydrogencarbonate + 2 NH4(+). The protein operates within nitrogen metabolism; urea degradation; CO(2) and NH(3) from urea (urease route): step 1/1. The chain is Urease subunit alpha from Delftia acidovorans (strain DSM 14801 / SPH-1).